Consider the following 393-residue polypeptide: Methylthioribose kinase (393 aa).

ATP-binding positions include Asn-38, Lys-53, and 107–109; that span reads EDL. Asp-225 is a binding site for substrate. Position 242–244 (242–244) interacts with ATP; it reads DPE. Arg-332 lines the substrate pocket.

The protein belongs to the methylthioribose kinase family. In terms of assembly, homodimer.

The enzyme catalyses 5-(methylsulfanyl)-D-ribose + ATP = 5-(methylsulfanyl)-alpha-D-ribose 1-phosphate + ADP + H(+). The protein operates within amino-acid biosynthesis; L-methionine biosynthesis via salvage pathway; S-methyl-5-thio-alpha-D-ribose 1-phosphate from S-methyl-5'-thioadenosine (hydrolase route): step 2/2. Its function is as follows. Catalyzes the phosphorylation of methylthioribose into methylthioribose-1-phosphate. The chain is Methylthioribose kinase from Bacillus cereus (strain G9842).